Here is a 310-residue protein sequence, read N- to C-terminus: tRNA dimethylallyltransferase (310 aa).

14-21 lines the ATP pocket; the sequence is GPTASGKS. 16–21 serves as a coordination point for substrate; the sequence is TASGKS. Interaction with substrate tRNA stretches follow at residues 39–42 and 163–167; these read DSMQ and QRIVR.

Belongs to the IPP transferase family. As to quaternary structure, monomer. Mg(2+) is required as a cofactor.

It carries out the reaction adenosine(37) in tRNA + dimethylallyl diphosphate = N(6)-dimethylallyladenosine(37) in tRNA + diphosphate. In terms of biological role, catalyzes the transfer of a dimethylallyl group onto the adenine at position 37 in tRNAs that read codons beginning with uridine, leading to the formation of N6-(dimethylallyl)adenosine (i(6)A). The protein is tRNA dimethylallyltransferase of Brucella ovis (strain ATCC 25840 / 63/290 / NCTC 10512).